Consider the following 581-residue polypeptide: A-type ATP synthase subunit A (581 aa).

232-239 serves as a coordination point for ATP; the sequence is GPFGSGKT.

Belongs to the ATPase alpha/beta chains family. As to quaternary structure, has multiple subunits with at least A(3), B(3), C, D, E, F, H, I and proteolipid K(x).

The protein resides in the cell membrane. The enzyme catalyses ATP + H2O + 4 H(+)(in) = ADP + phosphate + 5 H(+)(out). Functionally, component of the A-type ATP synthase that produces ATP from ADP in the presence of a proton gradient across the membrane. The A chain is the catalytic subunit. This Methanocorpusculum labreanum (strain ATCC 43576 / DSM 4855 / Z) protein is A-type ATP synthase subunit A.